A 371-amino-acid chain; its full sequence is Maltose/maltodextrin import ATP-binding protein MalK (371 aa).

The 231-residue stretch at 4–234 folds into the ABC transporter domain; sequence VTLKNVCKAY…PENRFVAGFI (231 aa). An ATP-binding site is contributed by 36-43; sequence GPSGCGKS.

It belongs to the ABC transporter superfamily. Maltooligosaccharide importer (TC 3.A.1.1.1) family. In terms of assembly, the complex is composed of two ATP-binding proteins (MalK), two transmembrane proteins (MalG and MalK) and a solute-binding protein (MalE).

Its subcellular location is the cell inner membrane. The catalysed reaction is D-maltose(out) + ATP + H2O = D-maltose(in) + ADP + phosphate + H(+). Its function is as follows. Part of the ABC transporter complex MalEFGK involved in maltose/maltodextrin import. Responsible for energy coupling to the transport system. The chain is Maltose/maltodextrin import ATP-binding protein MalK from Vibrio vulnificus (strain CMCP6).